Reading from the N-terminus, the 676-residue chain is MNDKDLEIEYLKKIDLFQRHNKHYYDKNKPIVSDQEFDLLKKDIIDLERKYKFLKSEYSPTKSIGFKPSKNFQKIKHKVPMLSLGNAFNEEDLKNFEKKIINFLSLKDVNTIEYSAEPKIDGISASLIYIDGKLTKGLSRGDGNEGEDITQNLKTIKDIPLEITKSNFPKEIDIRGEVFIENNDFKKIKDKFANPRNAASGSLRQKNSLITAKIPLKFIAYTYGYEKKMNIKNQTSFLENLKLWGFKTNPFNKKIIGVKNLMLNHKELEEKRKELAFDIDGIVYKVNDFDLQKRLGFAANAPRWAIAHKFSANSSISEIMNIEIQIGRTGALTPVAKIKPVNIGGVIVSNATLHNEDEIVRKDIRVGDTVTVERAGDVIPHVVSVDLKKRKQNSKKFIFPLKCPSCGSKTIKDYNETTKRQDAVRRCASEGFECEKIAIERIKHFVSKDAFNIDGFGKKIVENFWNLKLVRLPQDIFKLNYNKIEELEGWGKLSVANLRFSIEEKKNISLERFIYSLGIRHIGQENAKLIARHLKTASNFFRLSGEKNIESLSNIDGIGITQIQSIKKFFLNKTNLKVLSELEKNLLIKDVILINNNGLLKNKTFMLTGKLNGISRAEAKSLIEQNSGKIISNVNKKLDYLIAGDKPTLKKINTAKEWNIKIINQTEWLKMLNKSG.

NAD(+)-binding positions include 34 to 38 (DQEFD), 83 to 84 (SL), and glutamate 117. Lysine 119 (N6-AMP-lysine intermediate) is an active-site residue. NAD(+) contacts are provided by arginine 140, glutamate 177, lysine 285, and lysine 309. Residues cysteine 403, cysteine 406, cysteine 427, and cysteine 434 each contribute to the Zn(2+) site. The 82-residue stretch at 595–676 (NNNGLLKNKT…EWLKMLNKSG (82 aa)) folds into the BRCT domain.

It belongs to the NAD-dependent DNA ligase family. LigA subfamily. Requires Mg(2+) as cofactor. The cofactor is Mn(2+).

The catalysed reaction is NAD(+) + (deoxyribonucleotide)n-3'-hydroxyl + 5'-phospho-(deoxyribonucleotide)m = (deoxyribonucleotide)n+m + AMP + beta-nicotinamide D-nucleotide.. In terms of biological role, DNA ligase that catalyzes the formation of phosphodiester linkages between 5'-phosphoryl and 3'-hydroxyl groups in double-stranded DNA using NAD as a coenzyme and as the energy source for the reaction. It is essential for DNA replication and repair of damaged DNA. In Pelagibacter ubique (strain HTCC1062), this protein is DNA ligase.